A 474-amino-acid chain; its full sequence is Cobyric acid synthase (474 aa).

Residues 251–431 enclose the GATase cobBQ-type domain; the sequence is TGFVAIPRLP…LHGLLENSAY (181 aa). C328 functions as the Nucleophile in the catalytic mechanism. Residue H423 is part of the active site.

It belongs to the CobB/CobQ family. CobQ subfamily.

It participates in cofactor biosynthesis; adenosylcobalamin biosynthesis. In terms of biological role, catalyzes amidations at positions B, D, E, and G on adenosylcobyrinic A,C-diamide. NH(2) groups are provided by glutamine, and one molecule of ATP is hydrogenolyzed for each amidation. The chain is Cobyric acid synthase from Deinococcus radiodurans (strain ATCC 13939 / DSM 20539 / JCM 16871 / CCUG 27074 / LMG 4051 / NBRC 15346 / NCIMB 9279 / VKM B-1422 / R1).